A 179-amino-acid polypeptide reads, in one-letter code: Endoribonuclease YbeY (179 aa).

3 residues coordinate Zn(2+): His-148, His-152, and His-158.

The protein belongs to the endoribonuclease YbeY family. Requires Zn(2+) as cofactor.

Its subcellular location is the cytoplasm. Functionally, single strand-specific metallo-endoribonuclease involved in late-stage 70S ribosome quality control and in maturation of the 3' terminus of the 16S rRNA. The polypeptide is Endoribonuclease YbeY (Prochlorococcus marinus (strain MIT 9312)).